Consider the following 1564-residue polypeptide: Nucleoporin nup184 (1564 aa).

It localises to the nucleus. The protein localises to the nuclear pore complex. Functionally, interacts with pom152 in the core structure of the nuclear pore complex (NPC). Involved in the export of mRNA. This chain is Nucleoporin nup184 (nup184), found in Schizosaccharomyces pombe (strain 972 / ATCC 24843) (Fission yeast).